The sequence spans 120 residues: U13-lycotoxin-Ls1a (120 aa).

Positions 1 to 16 (MKILFVLISILHAVYC) are cleaved as a signal peptide. Residues 17-54 (FSSEEDVDSAYLANELEPVEDINSEQYAALEPKEEHER) constitute a propeptide that is removed on maturation. 4 disulfide bridges follow: Cys-56/Cys-70, Cys-63/Cys-76, Cys-69/Cys-87, and Cys-78/Cys-85. The Agouti domain maps to 56-95 (CADMGQDCKDDCDCCLNIATCNCWFGRYFCSCTFGDYQTC).

The protein belongs to the neurotoxin 05 (agouti) family. In terms of processing, contains 6 disulfide bonds. Expressed by the venom gland.

It is found in the secreted. The polypeptide is U13-lycotoxin-Ls1a (Lycosa singoriensis (Wolf spider)).